Consider the following 80-residue polypeptide: Exodeoxyribonuclease 7 small subunit (80 aa).

The protein belongs to the XseB family. Heterooligomer composed of large and small subunits.

The protein resides in the cytoplasm. The enzyme catalyses Exonucleolytic cleavage in either 5'- to 3'- or 3'- to 5'-direction to yield nucleoside 5'-phosphates.. Functionally, bidirectionally degrades single-stranded DNA into large acid-insoluble oligonucleotides, which are then degraded further into small acid-soluble oligonucleotides. This Streptomyces avermitilis (strain ATCC 31267 / DSM 46492 / JCM 5070 / NBRC 14893 / NCIMB 12804 / NRRL 8165 / MA-4680) protein is Exodeoxyribonuclease 7 small subunit.